Consider the following 911-residue polypeptide: MRVCSEASPRRRQVTMLVSLLLFSAQAGFCARSAAGHSGILSLGDPAASGSALGAAEDVGDITFAEAVNSAAFDTSAIFENKLYACSTPNGASVVRLAQPRKCHKYTDSTNMTEGIAVTFKQNIAPLIFNATLYYKHITTVTTWKGFGLAQITNEYRTRVNIGFGEIKEDIDGKGECVTRAAYNRNKVVYEAYDNDVYGVYKPLVPTLLRSPSTRSFHTTNVTQRRTALGYRTSTTVDCVVEYMQARSVYPYTYFGLATGNTLEISPFYKSSDKHSRYNLYAEDRVYEALGYQARDLETRVLAPPHNRNFVFEDEFTVAWDQMDETTTACTMAKWLEIPEAVRVSYNKSFHFNFKDLTATLVASKTPFNISRLHLGGCVPRIANETIEAIYGKKYKNTHVRSGGIEYYLANGGFLIAFQRLVSNDLAELYLDEAARQNHSAVSRSKRAAPSGGGSILSGPAGDLINTHTSATFAMLQFTYDKIQKHVNMLIGNLLEAWCEMQNRQLVVWHEIKKLNPASLMTSMYGHAVAARLLGDVLAVSKCLEIPIENVVMQDSMRVPGDPSMCYVRPVLVFKYPAAADSEAMRGRVARPANNSDVGGSQQAGEAEAQQHVGVHGQLGEHNEILHGRTLIEPCKASHRRYFLFGANYLLYEDYKFIRQVNASEIEEISSTFVNLDVTLLEDLDFVPLAVYTREELRDVGTLNYDEVVRYNNLYNKMFRDLDTALKFDDGLATLRAIGEFLTNTLGGAGKVLGNVVMGAAAAIISTVSGISSFLANPFAALGIGIAVIVCVIMGLLAFRYVMTLRANPVQTLFPGIIDVGEKARQHATVRKDEDASDKELAERVLRGLEILSFESEVRKRREKAAASAKSTLAKRIGQFLRHRKTSTKDDTRKLLKTFDDEDYYYDDEHL.

The signal sequence occupies residues 1–30; sequence MRVCSEASPRRRQVTMLVSLLLFSAQAGFC. Residues 31-778 are Virion surface-facing; it reads ARSAAGHSGI…SGISSFLANP (748 aa). Cystine bridges form between Cys-86-Cys-543, Cys-103-Cys-499, Cys-177-Cys-239, Cys-330-Cys-378, and Cys-566-Cys-635. N-linked (GlcNAc...) asparagine; by host glycosylation is found at Asn-111 and Asn-130. An involved in fusion and/or binding to host membrane region spans residues 143–149; the sequence is TWKGFGL. Asn-221 carries an N-linked (GlcNAc...) asparagine; by host glycan. The interval 228 to 233 is involved in fusion and/or binding to host membrane; the sequence is ALGYRT. 5 N-linked (GlcNAc...) asparagine; by host glycosylation sites follow: Asn-347, Asn-369, Asn-384, Asn-438, and Asn-594. Positions 591 to 610 are disordered; that stretch reads RPANNSDVGGSQQAGEAEAQ. The span at 599–610 shows a compositional bias: low complexity; that stretch reads GGSQQAGEAEAQ. The N-linked (GlcNAc...) asparagine; by host glycan is linked to Asn-662. A hydrophobic membrane proximal region region spans residues 722-776; the sequence is LDTALKFDDGLATLRAIGEFLTNTLGGAGKVLGNVVMGAAAAIISTVSGISSFLA. The helical transmembrane segment at 779-799 threads the bilayer; that stretch reads FAALGIGIAVIVCVIMGLLAF. The Intravirion portion of the chain corresponds to 800–911; it reads RYVMTLRANP…EDYYYDDEHL (112 aa).

The protein belongs to the herpesviridae glycoprotein B family. In terms of assembly, homotrimer; disulfide-linked. Binds to heparan sulfate proteoglycans. Interacts with gH/gL heterodimer.

The protein resides in the virion membrane. It is found in the host cell membrane. Its subcellular location is the host endosome membrane. It localises to the host Golgi apparatus membrane. Envelope glycoprotein that forms spikes at the surface of virion envelope. Essential for the initial attachment to heparan sulfate moieties of the host cell surface proteoglycans. Involved in fusion of viral and cellular membranes leading to virus entry into the host cell. Following initial binding to its host receptors, membrane fusion is mediated by the fusion machinery composed at least of gB and the heterodimer gH/gL. May be involved in the fusion between the virion envelope and the outer nuclear membrane during virion egress. The chain is Envelope glycoprotein B from Amazona oratrix (yellow-headed parrot).